The chain runs to 91 residues: Cell division topological specificity factor (91 aa).

This sequence belongs to the MinE family.

Prevents the cell division inhibition by proteins MinC and MinD at internal division sites while permitting inhibition at polar sites. This ensures cell division at the proper site by restricting the formation of a division septum at the midpoint of the long axis of the cell. This Lachnospira eligens (strain ATCC 27750 / DSM 3376 / VPI C15-48 / C15-B4) (Eubacterium eligens) protein is Cell division topological specificity factor.